Reading from the N-terminus, the 540-residue chain is MTLNSLPVWPALQAHYEEIRDAHLRDWFAPANDRAPTRAERFTFEGGGLAADFSKNRLTDATLALLVRLAREAGVEARRDAMFAGETVNPTEGRAALHTALRANAPDAPFQAQVAAERAKMARFADAVRSGAWTGYTGKRIRHVVNIGIGGSDLGPKMVVHALHHVATPDIATHFVSNVDGADLARVLERIDPEATLAIIVSKTFTTLETMTNARSLRDWFVANGCPEGALAKHFVGVSANPAEVVKFGIAEANVFEMWDWVGGRYSLWSAVGLSIMIAIGPERFDELLAGARDMDEHFRTAPLERNLPVLQGLVGIWYRNFFGAQSYLVAPYSEALHYLPSYLQQLEMESNGKSARIDGAFVDYPTSAVTWGEPGTNGQHAFFQMLHQGPTLVPIDFIAVLTPEHPLASHHPKLLANCFAQSEALMLGRTLDEARKIVGPAKPELAPHLTFPGNRPTTTLLVDALTPRTLGALIALYEHKVLVQAAVWNINPFDQWGVELGKILGKVVEADLTAAQVDPAKHDSSTSALIARARKALGE.

The active-site Proton donor is Glu-350. Residues His-381 and Lys-503 contribute to the active site.

This sequence belongs to the GPI family.

It is found in the cytoplasm. The enzyme catalyses alpha-D-glucose 6-phosphate = beta-D-fructose 6-phosphate. The protein operates within carbohydrate biosynthesis; gluconeogenesis. It participates in carbohydrate degradation; glycolysis; D-glyceraldehyde 3-phosphate and glycerone phosphate from D-glucose: step 2/4. Functionally, catalyzes the reversible isomerization of glucose-6-phosphate to fructose-6-phosphate. This chain is Glucose-6-phosphate isomerase, found in Burkholderia pseudomallei (strain 1710b).